A 115-amino-acid chain; its full sequence is Large ribosomal subunit protein bL20 (115 aa).

The protein belongs to the bacterial ribosomal protein bL20 family.

Functionally, binds directly to 23S ribosomal RNA and is necessary for the in vitro assembly process of the 50S ribosomal subunit. It is not involved in the protein synthesizing functions of that subunit. The protein is Large ribosomal subunit protein bL20 of Pelodictyon phaeoclathratiforme (strain DSM 5477 / BU-1).